A 350-amino-acid chain; its full sequence is MPVLHNRISNDALKAKMLAESEPRTTISFYKYFHIADPKATRDALYQLFTALNVFGRVYLAHEGINAQISVPASNVETFRAQLYAFDPALEGLRLNIALDDDGKSFWVLRMKVRDRIVADGIDDPHFDASNVGEYLQAAEVNAMLDDPDALFIDMRNHYEYEVGHFENALEIPADTFREQLPKAVEMMQAHKDKKIVMYCTGGIRCEKASAWMKHNGFNKVWHIEGGIIEYARKAREQGLPVRFIGKNFVFDERMGERISDEIIAHCHQCGAPCDSHTNCKNDGCHLLFIQCPVCAEKYKGCCSEICCEESALPPEEQRRRRAGRENGNKIFNKSRGRLNTTLGIPDPTE.

Positions 146 to 240 (DDPDALFIDM…YARKAREQGL (95 aa)) constitute a Rhodanese domain. Catalysis depends on C200, which acts as the Cysteine persulfide intermediate.

Belongs to the TrhO family.

It catalyses the reaction uridine(34) in tRNA + AH2 + O2 = 5-hydroxyuridine(34) in tRNA + A + H2O. Its function is as follows. Catalyzes oxygen-dependent 5-hydroxyuridine (ho5U) modification at position 34 in tRNAs. In Shigella flexneri serotype 5b (strain 8401), this protein is tRNA uridine(34) hydroxylase.